A 367-amino-acid polypeptide reads, in one-letter code: tRNA-specific 2-thiouridylase MnmA (367 aa).

ATP is bound by residues 11 to 18 and leucine 37; that span reads GLSGGVDS. The Nucleophile role is filled by cysteine 99. The cysteines at positions 99 and 195 are disulfide-linked. Glycine 123 contributes to the ATP binding site. The interaction with tRNA stretch occupies residues 145-147; sequence KDQ. Cysteine 195 acts as the Cysteine persulfide intermediate in catalysis. The interval 304 to 305 is interaction with tRNA; sequence RY.

It belongs to the MnmA/TRMU family.

It is found in the cytoplasm. It catalyses the reaction S-sulfanyl-L-cysteinyl-[protein] + uridine(34) in tRNA + AH2 + ATP = 2-thiouridine(34) in tRNA + L-cysteinyl-[protein] + A + AMP + diphosphate + H(+). Functionally, catalyzes the 2-thiolation of uridine at the wobble position (U34) of tRNA, leading to the formation of s(2)U34. The protein is tRNA-specific 2-thiouridylase MnmA of Chlorobium luteolum (strain DSM 273 / BCRC 81028 / 2530) (Pelodictyon luteolum).